The primary structure comprises 261 residues: (R)-S-adenosyl-L-methionine hydrolase (261 aa).

Positions 12, 72, and 187 each coordinate adenosine. Residues Asn-187, Ser-231, and Val-239 each coordinate (R)-S-adenosyl-L-methionine. Adenosine is bound at residue Val-239.

Belongs to the SAM hydrolase / SAM-dependent halogenase family.

It carries out the reaction (R)-S-adenosyl-L-methionine + H2O = adenosine + L-methionine + H(+). Specifically hydrolyzes (R)-S-adenosyl-L-methionine ((R)-SAM), the inactive form of the ubiquitous cofactor SAM, into adenosine and L-methionine. Is stereoselective as it cannot use the active form of SAM, (S)-S-adenosyl-L-methionine, as substrate. Likely plays a role in preventing accumulation of (R)-S-adenosyl-L-methionine in cells; maintenance of (S)-S-denosyl-L-methionine homochirality is important for cellular health given that the (R)-form is largely inactive as a methyl donor and can function as an inhibitor of methyltransferases. In Salinispora tropica (strain ATCC BAA-916 / DSM 44818 / JCM 13857 / NBRC 105044 / CNB-440), this protein is (R)-S-adenosyl-L-methionine hydrolase.